A 236-amino-acid polypeptide reads, in one-letter code: Small ribosomal subunit protein uS2c (236 aa).

Belongs to the universal ribosomal protein uS2 family.

The protein resides in the plastid. Its subcellular location is the chloroplast. The sequence is that of Small ribosomal subunit protein uS2c (rps2) from Populus alba (White poplar).